We begin with the raw amino-acid sequence, 358 residues long: F-box only protein 25 (358 aa).

An interaction with beta-actin region spans residues 1-83 (MPFLGQDWRS…NDTNTQSFYR (83 aa)). Residues 226-274 (LTLSDLPLHMLNNILYRFSDGWDIITLGQVTPTLYMLSEDRQLWKKLCQ) enclose the F-box domain.

As to quaternary structure, part of a SCF (SKP1-cullin-F-box) protein ligase complex consisting of FBXO25, SKP1, CUL1 and RBX1. Interacts directly with SKP1 and CUL1. Interacts (via C-terminus) with beta-actin (via N-terminus).

Its subcellular location is the nucleus. It functions in the pathway protein modification; protein ubiquitination. Functionally, substrate-recognition component of the SCF (SKP1-CUL1-F-box protein)-type E3 ubiquitin ligase complex. May play a role in accumulation of expanded polyglutamine (polyQ) protein huntingtin (HTT). This Macaca fascicularis (Crab-eating macaque) protein is F-box only protein 25 (FBXO25).